Here is a 33-residue protein sequence, read N- to C-terminus: Cytochrome b6-f complex subunit 7 (33 aa).

A helical transmembrane segment spans residues 9-29; sequence AVICFTLTLIGLSLGFVLLKI.

Belongs to the PetM family. As to quaternary structure, the 4 large subunits of the cytochrome b6-f complex are cytochrome b6, subunit IV (17 kDa polypeptide, PetD), cytochrome f and the Rieske protein, while the 4 small subunits are PetG, PetL, PetM and PetN. The complex functions as a dimer.

It is found in the plastid. The protein localises to the cyanelle thylakoid membrane. Component of the cytochrome b6-f complex, which mediates electron transfer between photosystem II (PSII) and photosystem I (PSI), cyclic electron flow around PSI, and state transitions. The protein is Cytochrome b6-f complex subunit 7 of Cyanophora paradoxa.